A 309-amino-acid polypeptide reads, in one-letter code: Anamorsin (309 aa).

The N-terminal SAM-like domain stretch occupies residues I6–S172. Residues Q173 to L222 form a linker region. 3 positions are modified to phosphoserine: S182, S183, and S213. [2Fe-2S] cluster contacts are provided by C235, C244, C247, and C249. The segment at C235–C249 is fe-S binding site A. A Phosphoserine modification is found at S269. Positions 271, 274, 282, and 285 each coordinate [4Fe-4S] cluster. 2 consecutive short sequence motifs (cx2C motif) follow at residues C271–C274 and C282–C285. The tract at residues C271 to C285 is fe-S binding site B. Phosphoserine is present on residues S302 and S304.

The protein belongs to the anamorsin family. As to quaternary structure, monomer. Interacts with NDOR1. Interacts with CHCHD4. [2Fe-2S] cluster is required as a cofactor. The cofactor is [4Fe-4S] cluster.

The protein localises to the cytoplasm. The protein resides in the nucleus. It is found in the mitochondrion intermembrane space. Component of the cytosolic iron-sulfur (Fe-S) protein assembly (CIA) machinery required for the maturation of extramitochondrial Fe-S proteins. Part of an electron transfer chain functioning in an early step of cytosolic Fe-S biogenesis, facilitating the de novo assembly of a [4Fe-4S] cluster on the scaffold complex NUBP1-NUBP2. Electrons are transferred to CIAPIN1 from NADPH via the FAD- and FMN-containing protein NDOR1. NDOR1-CIAPIN1 are also required for the assembly of the diferric tyrosyl radical cofactor of ribonucleotide reductase (RNR), probably by providing electrons for reduction during radical cofactor maturation in the catalytic small subunit. Has anti-apoptotic effects in the cell. Involved in negative control of cell death upon cytokine withdrawal. Promotes development of hematopoietic cells. This is Anamorsin from Rattus norvegicus (Rat).